The chain runs to 539 residues: Chaperonin GroEL (539 aa).

Residues 29-32 (TLGP), 86-90 (DGTTT), G413, and D492 contribute to the ATP site.

The protein belongs to the chaperonin (HSP60) family. In terms of assembly, forms a cylinder of 14 subunits composed of two heptameric rings stacked back-to-back. Interacts with the co-chaperonin GroES.

It localises to the cytoplasm. It carries out the reaction ATP + H2O + a folded polypeptide = ADP + phosphate + an unfolded polypeptide.. Its function is as follows. Together with its co-chaperonin GroES, plays an essential role in assisting protein folding. The GroEL-GroES system forms a nano-cage that allows encapsulation of the non-native substrate proteins and provides a physical environment optimized to promote and accelerate protein folding. The protein is Chaperonin GroEL of Fusobacterium nucleatum subsp. nucleatum (strain ATCC 25586 / DSM 15643 / BCRC 10681 / CIP 101130 / JCM 8532 / KCTC 2640 / LMG 13131 / VPI 4355).